The following is a 210-amino-acid chain: Probable GTP-binding protein EngB (210 aa).

One can recognise an EngB-type G domain in the interval 24 to 199 (QGCEVAFAGR…WEVLGRWLDL (176 aa)). GTP contacts are provided by residues 32-39 (GRSNAGKS), 59-63 (GRTRM), 77-80 (DLPG), 144-147 (TKSD), and 178-180 (FSS). Residues Ser39 and Thr61 each contribute to the Mg(2+) site.

This sequence belongs to the TRAFAC class TrmE-Era-EngA-EngB-Septin-like GTPase superfamily. EngB GTPase family. The cofactor is Mg(2+).

Its function is as follows. Necessary for normal cell division and for the maintenance of normal septation. This chain is Probable GTP-binding protein EngB, found in Methylococcus capsulatus (strain ATCC 33009 / NCIMB 11132 / Bath).